A 419-amino-acid polypeptide reads, in one-letter code: Ribosome biogenesis protein NOP53 (419 aa).

2 disordered regions span residues 1-21 and 233-283; these read MGIKERNAPSQYKQSSRKNKR and KAFE…KIRQ. A compositionally biased stretch (basic and acidic residues) spans 233–261; the sequence is KAFEDKGLVSDQDVNHSIDSDDQSEHEQA. A phosphoserine mark is found at S242, S249, S252, and S256. The span at 269–283 shows a compositional bias: basic residues; the sequence is KNKRKTRSQRNKIRQ.

It belongs to the NOP53 family.

The protein resides in the nucleus. The protein localises to the nucleolus. It localises to the nucleoplasm. May play a role in ribosome biogenesis. The polypeptide is Ribosome biogenesis protein NOP53 (Schizosaccharomyces pombe (strain 972 / ATCC 24843) (Fission yeast)).